Here is a 253-residue protein sequence, read N- to C-terminus: MSTTNKIYFIAGGNRGIGLSLVKELSNREGTVVFASARKPEAATELQEWSKSHSNVHIIKLDISSLESANEAAQEVAKAVGKVDVLWVNSGIFHSFNTVLNTPDDVWNSHYKTNVLGPIHVYQAFYPLVKKGESKIIVFTSSLVGSMGAFFPFNQSGYGQSKAALNFTMKEISFELQDEGFIVISIHPGMVRTDSAQEAVNQHAEAKPEILDIFAKQALAPDQSASDMLKVVDNLKPENNGFFFNYDGTTIPY.

The NADP(+) site is built by Ile-17, Ser-36, Asp-62, Asn-89, Tyr-158, Lys-162, Val-191, and Thr-193. Tyr-158 functions as the Proton donor in the catalytic mechanism. Lys-162 (lowers pKa of active site Tyr) is an active-site residue.

Belongs to the short-chain dehydrogenases/reductases (SDR) family.

Its subcellular location is the cytoplasm. The protein resides in the nucleus. This is an uncharacterized protein from Schizosaccharomyces pombe (strain 972 / ATCC 24843) (Fission yeast).